Consider the following 493-residue polypeptide: Angiopoietin-related protein 2 (493 aa).

Residues 1 to 19 (MRPLCMTYWWLGLLATVGA) form the signal peptide. 2 coiled-coil regions span residues 77 to 115 (EVHLENRVHKQELELLNNELLKQKRQIETLQQLVEVDGG) and 152 to 202 (ALEL…QLEE). N-linked (GlcNAc...) asparagine glycans are attached at residues N164 and N192. The region spanning 269 to 489 (DKPSGPWRDC…KVVMMIRPNP (221 aa)) is the Fibrinogen C-terminal domain. Cystine bridges form between C278–C307 and C430–C443.

In terms of tissue distribution, widely expressed in heart, tongue, lung and skeletal muscle. Also found in lower levels in kidney, epididymis and testis.

The protein resides in the secreted. In terms of biological role, induces sprouting in endothelial cells through an autocrine and paracrine action. This is Angiopoietin-related protein 2 (Angptl2) from Mus musculus (Mouse).